The chain runs to 204 residues: ADP-ribosylation factor-like protein 15 (204 aa).

GTP is bound by residues 39-46, 82-86, and 142-145; these read GLTGSGKT, ELGGA, and NHQD.

The protein belongs to the small GTPase superfamily. Arf family.

In Homo sapiens (Human), this protein is ADP-ribosylation factor-like protein 15 (ARL15).